Here is a 122-residue protein sequence, read N- to C-terminus: Large ribosomal subunit protein uL14 (122 aa).

It belongs to the universal ribosomal protein uL14 family. As to quaternary structure, part of the 50S ribosomal subunit. Forms a cluster with proteins L3 and L19. In the 70S ribosome, L14 and L19 interact and together make contacts with the 16S rRNA in bridges B5 and B8.

Binds to 23S rRNA. Forms part of two intersubunit bridges in the 70S ribosome. This chain is Large ribosomal subunit protein uL14, found in Stutzerimonas stutzeri (strain A1501) (Pseudomonas stutzeri).